The sequence spans 499 residues: Probable inactive receptor-like protein kinase At3g56050 (499 aa).

Positions 1–31 (MSNNWKSVRLRLQNRTLVFLLVILSFGSCYS) are cleaved as a signal peptide. N14 carries N-linked (GlcNAc...) asparagine glycosylation. The Extracellular portion of the chain corresponds to 32-146 (LKSQGDGFLE…SKTSSNSTIP (115 aa)). Residues 80–121 (RDRPVARATPPSSSVSTRPDAKRSSTLPPPQKSPPAQHVSAP) form a disordered region. N-linked (GlcNAc...) asparagine glycosylation is present at N142. Residues 147–167 (IVAGCIAGAVFILLLATGVFF) form a helical membrane-spanning segment. The Cytoplasmic portion of the chain corresponds to 168–499 (FKSKAGKSVN…WAELEVLSTA (332 aa)). The Protein kinase domain maps to 208-474 (EDFSNVIGSC…EVTGRLREIT (267 aa)).

It localises to the cell membrane. The polypeptide is Probable inactive receptor-like protein kinase At3g56050 (Arabidopsis thaliana (Mouse-ear cress)).